The chain runs to 142 residues: MKTFSAKPADVTHEWFVIDATDKVLGRVASEVALRLRGKHKAIYTPHVDTGDFIVIINAAQLRVTGAKALDKMYYRHSGYPGGITATNFRDMQAKHPGRALEKAVKGMLPKGPLGYAMIKKLKVYGGAEHPHTAQQPKVLDI.

It belongs to the universal ribosomal protein uL13 family. As to quaternary structure, part of the 50S ribosomal subunit.

This protein is one of the early assembly proteins of the 50S ribosomal subunit, although it is not seen to bind rRNA by itself. It is important during the early stages of 50S assembly. This is Large ribosomal subunit protein uL13 from Polaromonas sp. (strain JS666 / ATCC BAA-500).